A 474-amino-acid chain; its full sequence is PRAME family member 7 (474 aa).

An LRR 1; degenerate repeat occupies 97 to 122 (QSKLQVLDLRNVDENFCDIFSGATAS). One copy of the LRR 2; degenerate repeat lies at 177-201 (HVCCKELQVFGMPIHSIIEVLNMVE). Residues 202–228 (LDCIQEVEVCCPWELSTLVKFAPYLGQ) form an LRR 3; degenerate repeat. An LRR 4; degenerate repeat occupies 229-264 (MRNLRKLVLFNIRASACIPPDNKGQFIARFTSQFLK). 5 LRR repeats span residues 265-290 (LDYFQNLSMHSVSFLEGHLDQLLRCL), 291-322 (QASLEMVVMTDCLLSESDLKHLSWCPSIRQLK), 323-341 (ELDLRGVTLTHFSPEPLTG), 347-374 (VATLQTLDLEDCGIMDSQLSAILPVLSR), and 375-399 (CSQLSTFSFCGNLISMAALENLLRH).

This sequence belongs to the PRAME family.

The polypeptide is PRAME family member 7 (Homo sapiens (Human)).